The following is an 83-amino-acid chain: Small ribosomal subunit protein uS17 (83 aa).

Belongs to the universal ribosomal protein uS17 family. In terms of assembly, part of the 30S ribosomal subunit.

In terms of biological role, one of the primary rRNA binding proteins, it binds specifically to the 5'-end of 16S ribosomal RNA. This Magnetococcus marinus (strain ATCC BAA-1437 / JCM 17883 / MC-1) protein is Small ribosomal subunit protein uS17.